Here is a 126-residue protein sequence, read N- to C-terminus: Protein ApaG (126 aa).

The ApaG domain occupies 2-126 (SFPIDSIKIK…FRLAMPGVMQ (125 aa)).

This Shewanella denitrificans (strain OS217 / ATCC BAA-1090 / DSM 15013) protein is Protein ApaG.